We begin with the raw amino-acid sequence, 377 residues long: Glutamate 5-kinase (377 aa).

Residue lysine 20 coordinates ATP. Serine 59, aspartate 146, and asparagine 158 together coordinate substrate. ATP is bound by residues 178-179 and 220-226; these read SD and TGGMSTK. The PUA domain occupies 285–363; the sequence is RGTLTVDAGA…ADIEAVLGYR (79 aa).

The protein belongs to the glutamate 5-kinase family.

The protein localises to the cytoplasm. It catalyses the reaction L-glutamate + ATP = L-glutamyl 5-phosphate + ADP. It participates in amino-acid biosynthesis; L-proline biosynthesis; L-glutamate 5-semialdehyde from L-glutamate: step 1/2. In terms of biological role, catalyzes the transfer of a phosphate group to glutamate to form L-glutamate 5-phosphate. This is Glutamate 5-kinase from Myxococcus xanthus (strain DK1622).